The following is a 1890-amino-acid chain: Proteasome-associated protein ECM29 homolog (1890 aa).

18 HEAT repeats span residues 6 to 29 (NAEI…EKLE), 30 to 67 (AAVG…RLSS), 130 to 167 (DKLF…ICAN), 226 to 263 (FSDL…MLDF), 294 to 330 (RVRQ…TNTN), 334 to 354 (KVLA…ELVS), 355 to 395 (KVSK…SFPQ), 459 to 496 (GQQH…EYYA), 498 to 523 (ARYL…LYGT), 524 to 561 (SKKD…EQRR), 565 to 602 (PSFQ…SLEV), 685 to 722 (AKQL…FGLS), 776 to 813 (PQFV…AVEI), 843 to 882 (STKL…GDGE), 938 to 975 (DDFD…HCSQ), 980 to 1018 (LAKK…ISDS), 1118 to 1155 (PYLG…DSKE), and 1159 to 1196 (RYYW…RPNG). Position 1213 is a phosphoserine (S1213). HEAT repeat units lie at residues 1271 to 1309 (AVAS…SSGS), 1313 to 1350 (PHLA…AQEA), 1378 to 1415 (SVLE…IRLG), 1416 to 1457 (KEMT…LAKE), 1497 to 1534 (DYMD…DVSP), 1541 to 1578 (LNLN…RLSS), 1583 to 1620 (PDRL…GLDR), and 1623 to 1660 (QICS…QLEA). The interval 1680 to 1702 (RKESDDEDEPNTSQELSADERNK) is disordered. S1683 carries the phosphoserine modification. T1691 is modified (phosphothreonine). A Phosphoserine modification is found at S1692. 2 HEAT repeats span residues 1751-1788 (PVQV…EKKI) and 1826-1863 (KEAL…NLEK).

In terms of assembly, associated with the proteasome.

The protein localises to the cytoplasm. This Drosophila melanogaster (Fruit fly) protein is Proteasome-associated protein ECM29 homolog.